Consider the following 256-residue polypeptide: Protein N-terminal and lysine N-methyltransferase EFM7 (256 aa).

The tract at residues 1–26 is disordered; sequence MSDTESLNDALGLFDEPEDFRPEKPK. S-adenosyl-L-methionine is bound by residues Trp64, 90–92, Asp112, Trp145, and Ser168; that span reads GAA.

It belongs to the class I-like SAM-binding methyltransferase superfamily. EFM7 family.

It is found in the cytoplasm. Functionally, S-adenosyl-L-methionine-dependent protein methyltransferase that trimethylates the N-terminal glycine 'Gly-2' of elongation factor 1-alpha, before also catalyzing the mono- and dimethylation of 'Lys-3'. This is Protein N-terminal and lysine N-methyltransferase EFM7 from Candida glabrata (strain ATCC 2001 / BCRC 20586 / JCM 3761 / NBRC 0622 / NRRL Y-65 / CBS 138) (Yeast).